A 212-amino-acid polypeptide reads, in one-letter code: ATP-dependent dethiobiotin synthetase BioD (212 aa).

Residue 13 to 18 (GIGKTV) coordinates ATP. T17 lines the Mg(2+) pocket. Residue K33 is part of the active site. S37 is a substrate binding site. E100 provides a ligand contact to Mg(2+). ATP-binding positions include 100-103 (EGAG), 160-161 (IS), and 184-186 (PLL).

It belongs to the dethiobiotin synthetase family. In terms of assembly, homodimer. Mg(2+) is required as a cofactor.

It localises to the cytoplasm. It catalyses the reaction (7R,8S)-7,8-diammoniononanoate + CO2 + ATP = (4R,5S)-dethiobiotin + ADP + phosphate + 3 H(+). It participates in cofactor biosynthesis; biotin biosynthesis; biotin from 7,8-diaminononanoate: step 1/2. Catalyzes a mechanistically unusual reaction, the ATP-dependent insertion of CO2 between the N7 and N8 nitrogen atoms of 7,8-diaminopelargonic acid (DAPA, also called 7,8-diammoniononanoate) to form a ureido ring. The sequence is that of ATP-dependent dethiobiotin synthetase BioD from Brucella abortus (strain S19).